The primary structure comprises 66 residues: Large ribosomal subunit protein bL31 (66 aa).

Positions 16, 18, 36, and 39 each coordinate Zn(2+).

This sequence belongs to the bacterial ribosomal protein bL31 family. Type A subfamily. In terms of assembly, part of the 50S ribosomal subunit. It depends on Zn(2+) as a cofactor.

Its function is as follows. Binds the 23S rRNA. The protein is Large ribosomal subunit protein bL31 of Campylobacter curvus (strain 525.92).